A 351-amino-acid polypeptide reads, in one-letter code: MLYSLFKKYLFRLDAEEVHEKVCKILKILSRSPFFCNLIHAQFGYTNPKLENEILGLHFPNPLGLAAGFDKNASMIRALTAFGFGYLEAGTLTNTAQSGNEKPRLFRHIEEESLQNAMGFNNYGAVLGVRAFERFAPYKTPIGINLGKNKHIEQDNALEDYKAVLIKCLNIGDYYTFNLSSPNTPNLRDLQNKAFVSELFCMAKEMTKKPLFLKIAPDLEIDAMLEITNSAIEAGANGIIATNTTIDKSLVFAPKETGGLSGKCLTQKSREIFKELAKAFFNKTILVSVGGISDAKEAYERIKMGASLLQIYSAFIYNGPNLCQNILKDLVKLLQKDGFLSVKEVIGADLR.

FMN is bound by residues 67–71 (AGFDK) and T91. Residue K71 coordinates substrate. 116–120 (NAMGF) provides a ligand contact to substrate. FMN contacts are provided by N145 and N178. Substrate is bound at residue N178. Residue S181 is the Nucleophile of the active site. N183 provides a ligand contact to substrate. Residues K214 and T242 each coordinate FMN. Position 243 to 244 (243 to 244 (NT)) interacts with substrate. FMN-binding positions include G262, G291, and 312 to 313 (YS).

This sequence belongs to the dihydroorotate dehydrogenase family. Type 2 subfamily. As to quaternary structure, monomer. FMN is required as a cofactor.

The protein localises to the cell membrane. The enzyme catalyses (S)-dihydroorotate + a quinone = orotate + a quinol. It functions in the pathway pyrimidine metabolism; UMP biosynthesis via de novo pathway; orotate from (S)-dihydroorotate (quinone route): step 1/1. Catalyzes the conversion of dihydroorotate to orotate with quinone as electron acceptor. This is Dihydroorotate dehydrogenase (quinone) from Helicobacter acinonychis (strain Sheeba).